The primary structure comprises 119 residues: Large ribosomal subunit protein uL22 (119 aa).

Belongs to the universal ribosomal protein uL22 family. As to quaternary structure, part of the 50S ribosomal subunit.

Functionally, this protein binds specifically to 23S rRNA; its binding is stimulated by other ribosomal proteins, e.g. L4, L17, and L20. It is important during the early stages of 50S assembly. It makes multiple contacts with different domains of the 23S rRNA in the assembled 50S subunit and ribosome. Its function is as follows. The globular domain of the protein is located near the polypeptide exit tunnel on the outside of the subunit, while an extended beta-hairpin is found that lines the wall of the exit tunnel in the center of the 70S ribosome. This is Large ribosomal subunit protein uL22 from Rickettsia conorii (strain ATCC VR-613 / Malish 7).